Reading from the N-terminus, the 141-residue chain is Hemoglobin subunit alpha (141 aa).

Positions 1-141 constitute a Globin domain; sequence VLSSDDKCNV…VSSVLTSKYR (141 aa). Histidine 58 contributes to the O2 binding site. Heme b is bound at residue histidine 87.

Belongs to the globin family. In terms of assembly, heterotetramer of two alpha chains and two beta chains. Red blood cells.

In terms of biological role, involved in oxygen transport from the lung to the various peripheral tissues. Has antimicrobial activity against B.subtilis ATCC 6633. Has antioxidant activity. The polypeptide is Hemoglobin subunit alpha (Crocodylus siamensis (Siamese crocodile)).